A 155-amino-acid polypeptide reads, in one-letter code: Cytochrome c-type biogenesis protein CcmE (155 aa).

Over 1 to 8 (MNPVRKRR) the chain is Cytoplasmic. A helical; Signal-anchor for type II membrane protein membrane pass occupies residues 9–29 (LFIVLAILAGVGAAVALALSA). Over 30 to 155 (LQQNINLFYT…YENGKPGGAQ (126 aa)) the chain is Periplasmic. Residues His124 and Tyr128 each contribute to the heme site.

The protein belongs to the CcmE/CycJ family.

It is found in the cell inner membrane. Functionally, heme chaperone required for the biogenesis of c-type cytochromes. Transiently binds heme delivered by CcmC and transfers the heme to apo-cytochromes in a process facilitated by CcmF and CcmH. This Azotobacter vinelandii (strain DJ / ATCC BAA-1303) protein is Cytochrome c-type biogenesis protein CcmE.